We begin with the raw amino-acid sequence, 370 residues long: Putative 8-amino-7-oxononanoate synthase (370 aa).

Arginine 20 is a substrate binding site. Glycine 95–tyrosine 96 is a binding site for pyridoxal 5'-phosphate. A substrate-binding site is contributed by histidine 120. Pyridoxal 5'-phosphate contacts are provided by residues serine 167, aspartate 192–histidine 195, and threonine 223–lysine 226. Residue lysine 226 is modified to N6-(pyridoxal phosphate)lysine. Position 337 (threonine 337) interacts with substrate.

The protein belongs to the class-II pyridoxal-phosphate-dependent aminotransferase family. BioF subfamily. Homodimer. The cofactor is pyridoxal 5'-phosphate.

The enzyme catalyses 6-carboxyhexanoyl-[ACP] + L-alanine + H(+) = (8S)-8-amino-7-oxononanoate + holo-[ACP] + CO2. It participates in cofactor biosynthesis; biotin biosynthesis. Catalyzes the decarboxylative condensation of pimeloyl-[acyl-carrier protein] and L-alanine to produce 8-amino-7-oxononanoate (AON), [acyl-carrier protein], and carbon dioxide. The polypeptide is Putative 8-amino-7-oxononanoate synthase (bioF) (Methanococcus vannielii (strain ATCC 35089 / DSM 1224 / JCM 13029 / OCM 148 / SB)).